The sequence spans 400 residues: NADPH dehydrogenase 3 (400 aa).

Residues Thr-38 and Gln-115 each contribute to the FMN site. Substrate contacts are provided by His-192 and Asn-195. Tyr-197 acts as the Proton donor in catalysis. FMN is bound by residues Arg-244 and Arg-349. Residue Tyr-376 coordinates substrate.

Homodimer or heterodimer with OYE2. Requires FMN as cofactor.

The catalysed reaction is A + NADPH + H(+) = AH2 + NADP(+). Flavin-dependent enoate reductase that catalyzes the chemo- and stereoslective hydrogenation of electron-poor alkenes. The enzyme is reduced by NADPH, and oxygen, quinones, and alpha,beta-unsaturated aldehydes and ketones can act as electron acceptors to complete catalytic turnover. The physiological oxidant remains elusive. Has a prooxidant activity, increasing reactive oxygen species (ROS) levels when overexpressed. Formation of OYE2-OYE3 heterodimers contribute to the induction of programmed cell death upon oxidative stress. The chain is NADPH dehydrogenase 3 from Saccharomyces cerevisiae (strain ATCC 204508 / S288c) (Baker's yeast).